The sequence spans 123 residues: Large ribosomal subunit protein eL8 (123 aa).

This sequence belongs to the eukaryotic ribosomal protein eL8 family. In terms of assembly, part of the 50S ribosomal subunit. Probably part of the RNase P complex.

The protein resides in the cytoplasm. In terms of biological role, multifunctional RNA-binding protein that recognizes the K-turn motif in ribosomal RNA, the RNA component of RNase P, box H/ACA, box C/D and box C'/D' sRNAs. The chain is Large ribosomal subunit protein eL8 from Methanosphaera stadtmanae (strain ATCC 43021 / DSM 3091 / JCM 11832 / MCB-3).